The sequence spans 219 residues: Ras-related protein Rab-3B (219 aa).

Position 2 is an N-acetylalanine (A2). GTP is bound by residues S31, S32, V33, G34, K35, T36, S37, P49, and S53. Residue S32 coordinates GDP. The GDP site is built by G34, K35, T36, and S37. T36 contacts Mg(2+). The Switch 1 signature appears at 45-58 (DTFTPAFVSTVGID). Residues T54 and D77 each coordinate Mg(2+). The short motif at 78-96 (TAGQERYRTITTAYYRGAM) is the Switch 2 element. G80 provides a ligand contact to GTP. Position 86 is a phosphothreonine; by LRRK2 (T86). N135, K136, and D138 together coordinate GTP. Residues N135, K136, D138, M139, A166, and K167 each coordinate GDP. Residues A166 and K167 each coordinate GTP. S188 and S190 each carry phosphoserine. Residues C217 and C219 are each lipidated (S-geranylgeranyl cysteine). C219 carries the cysteine methyl ester modification.

The protein belongs to the small GTPase superfamily. Rab family. Interacts with RIMS1, RIMS2, RPH3A and RPH3AL. The GTP-bound form interacts with GAS8/DRC4 (via coiled-coil domains). The GTP-bound form interacts with REP15. Interacts with GDI2, CHM and CHML; phosphorylation at Thr-86 disrupts these interactions. Interacts with MADD (via uDENN domain); the GTP-bound form is preferred for interaction. Requires Mg(2+) as cofactor. Phosphorylation of Thr-86 in the switch II region by LRRK2 prevents the association of RAB regulatory proteins, including CHM, CHML and RAB GDP dissociation inhibitor GDI2.

The protein resides in the cell membrane. The protein localises to the golgi apparatus. The enzyme catalyses GTP + H2O = GDP + phosphate + H(+). Its activity is regulated as follows. Regulated by guanine nucleotide exchange factors (GEFs) which promote the exchange of bound GDP for free GTP. Regulated by GTPase activating proteins (GAPs) which increase the GTP hydrolysis activity. Inhibited by GDP dissociation inhibitors (GDIs) which prevent Rab-GDP dissociation. Its function is as follows. The small GTPases Rab are key regulators of intracellular membrane trafficking, from the formation of transport vesicles to their fusion with membranes. Rabs cycle between an inactive GDP-bound form and an active GTP-bound form that is able to recruit to membranes different sets of downstream effectors directly responsible for vesicle formation, movement, tethering and fusion. The protein is Ras-related protein Rab-3B of Homo sapiens (Human).